The chain runs to 115 residues: Cytochrome c oxidase subunit 3 (115 aa).

Helical transmembrane passes span 32-52 (CLQG…LQGL) and 70-90 (FFLA…FLMI).

It belongs to the cytochrome c oxidase subunit 3 family. Component of the cytochrome c oxidase (complex IV, CIV), a multisubunit enzyme composed of a catalytic core of 3 subunits and several supernumerary subunits. The complex exists as a monomer or a dimer and forms supercomplexes (SCs) in the inner mitochondrial membrane with ubiquinol-cytochrome c oxidoreductase (cytochrome b-c1 complex, complex III, CIII).

Its subcellular location is the mitochondrion inner membrane. It catalyses the reaction 4 Fe(II)-[cytochrome c] + O2 + 8 H(+)(in) = 4 Fe(III)-[cytochrome c] + 2 H2O + 4 H(+)(out). Its function is as follows. Component of the cytochrome c oxidase, the last enzyme in the mitochondrial electron transport chain which drives oxidative phosphorylation. The respiratory chain contains 3 multisubunit complexes succinate dehydrogenase (complex II, CII), ubiquinol-cytochrome c oxidoreductase (cytochrome b-c1 complex, complex III, CIII) and cytochrome c oxidase (complex IV, CIV), that cooperate to transfer electrons derived from NADH and succinate to molecular oxygen, creating an electrochemical gradient over the inner membrane that drives transmembrane transport and the ATP synthase. Cytochrome c oxidase is the component of the respiratory chain that catalyzes the reduction of oxygen to water. Electrons originating from reduced cytochrome c in the intermembrane space (IMS) are transferred via the dinuclear copper A center (CU(A)) of subunit 2 and heme A of subunit 1 to the active site in subunit 1, a binuclear center (BNC) formed by heme A3 and copper B (CU(B)). The BNC reduces molecular oxygen to 2 water molecules using 4 electrons from cytochrome c in the IMS and 4 protons from the mitochondrial matrix. The polypeptide is Cytochrome c oxidase subunit 3 (COIII) (Artemia salina (Brine shrimp)).